The following is a 147-amino-acid chain: Transthyretin (147 aa).

An N-terminal signal peptide occupies residues 1–20 (MASHRLLLLCLAGLVFVSEA). A Sulfocysteine modification is found at C30. Position 35 (K35) interacts with L-thyroxine. E62 is modified (4-carboxyglutamate). S72 carries the post-translational modification Phosphoserine. Position 74 (E74) interacts with L-thyroxine. The N-linked (GlcNAc...) asparagine glycan is linked to N118. An L-thyroxine-binding site is contributed by S137.

The protein belongs to the transthyretin family. In terms of assembly, homotetramer. Dimer of dimers. In the homotetramer, subunits assemble around a central channel that can accommodate two ligand molecules. Interacts with RBP4. Post-translationally, sulfonation of the reactive cysteine Cys-30 enhances the stability of the native conformation of TTR, avoiding misassembly of the protein leading to amyloid formation. As to expression, detected in liver.

The protein resides in the secreted. Its function is as follows. Thyroid hormone-binding protein. Probably transports thyroxine from the bloodstream to the brain. This is Transthyretin (TTR) from Pongo abelii (Sumatran orangutan).